The sequence spans 863 residues: Envelope glycoprotein gp160 (863 aa).

A signal peptide spans 1-32 (MIVTMKAMEKRNKKLWTLYLAMALITPCLSLR). At 33–684 (QLYATVYAGV…ITKWLWYIKI (652 aa)) the chain is on the extracellular side. Cys54 and Cys74 are joined by a disulfide. N-linked (GlcNAc...) asparagine; by host glycans are attached at residues Asn59 and Asn88. Cystine bridges form between Cys119-Cys201, Cys126-Cys192, Cys131-Cys146, Cys214-Cys243, and Cys224-Cys235. Residues 131-145 (CTNIAGTTNENLMKK) form a V1 region. The V2 stretch occupies residues 146–192 (CEFNVTTVIKDKKEKKQALFYVSDLMELNETSSTNKTNSKMYTLTNC). 15 N-linked (GlcNAc...) asparagine; by host glycosylation sites follow: Asn149, Asn174, Asn180, Asn193, Asn225, Asn230, Asn237, Asn258, Asn285, Asn289, Asn320, Asn330, Asn350, Asn356, and Asn360. The V3 stretch occupies residues 292-326 (CERPQIDIQEMRIGPMAWYSMGIGGTAGNSSRAAY). Cys292 and Cys327 form a disulfide bridge. A CD4-binding loop region spans residues 362-372 (SSGGDLEVTHL). 2 disulfides stabilise this stretch: Cys376/Cys442 and Cys383/Cys415. Residues 383–415 (CNTAKMFNYTFSCNGTTCSVSNVSQGNNGTLPC) are V4. N-linked (GlcNAc...) asparagine; by host glycans are attached at residues Asn390, Asn396, Asn404, Asn410, Asn439, Asn445, Asn458, and Asn463. V5 stretches follow at residues 458-469 (NSSNNNVTFRPI) and 460-469 (SNNNVTFRPI). A fusion peptide region spans residues 514 to 534 (AVGLGMLFLGVLSAAGSTMGA). The interval 576–594 (RQLRARLLALETLLQNQQL) is immunosuppression. A disulfide bridge connects residues Cys600 and Cys606. Asn613, Asn619, and Asn637 each carry an N-linked (GlcNAc...) asparagine; by host glycan. Residues 633-667 (RQISNISSTIYEEIQKAQVQQEQNEKKLLELDEWA) are a coiled coil. The MPER; binding to GalCer stretch occupies residues 662–683 (ELDEWASIWNWLDITKWLWYIK). A helical transmembrane segment spans residues 685 to 705 (AIIIVGALVGVRVIMIVLNIV). Residues 706–863 (KNIRQGYQPL…IRQGLERSLL (158 aa)) are Cytoplasmic-facing. Positions 712-715 (YQPL) match the YXXL motif; contains endocytosis signal motif. A Di-leucine internalization motif motif is present at residues 862-863 (LL).

The protein belongs to the HIV-1 env protein family. In terms of assembly, the mature envelope protein (Env) consists of a homotrimer of non-covalently associated gp120-gp41 heterodimers. The resulting complex protrudes from the virus surface as a spike. There seems to be as few as 10 spikes on the average virion. Interacts with host CD4, CCR5 and CXCR4. Gp120 also interacts with the C-type lectins CD209/DC-SIGN and CLEC4M/DC-SIGNR (collectively referred to as DC-SIGN(R)). Gp120 and gp41 interact with GalCer. Gp120 interacts with host ITGA4/ITGB7 complex; on CD4+ T-cells, this interaction results in rapid activation of integrin ITGAL/LFA-1, which facilitates efficient cell-to-cell spreading of HIV-1. Gp120 interacts with cell-associated heparan sulfate; this interaction increases virus infectivity on permissive cells and may be involved in infection of CD4- cells. As to quaternary structure, the mature envelope protein (Env) consists of a homotrimer of non-covalently associated gp120-gp41 heterodimers. The resulting complex protrudes from the virus surface as a spike. There seems to be as few as 10 spikes on the average virion. Post-translationally, highly glycosylated by host. The high number of glycan on the protein is reffered to as 'glycan shield' because it contributes to hide protein sequence from adaptive immune system. In terms of processing, palmitoylation of the transmembrane protein and of Env polyprotein (prior to its proteolytic cleavage) is essential for their association with host cell membrane lipid rafts. Palmitoylation is therefore required for envelope trafficking to classical lipid rafts, but not for viral replication. Specific enzymatic cleavages in vivo yield mature proteins. Envelope glycoproteins are synthesized as an inactive precursor that is heavily N-glycosylated and processed likely by host cell furin in the Golgi to yield the mature SU and TM proteins. The cleavage site between SU and TM requires the minimal sequence [KR]-X-[KR]-R. About 2 of the 9 disulfide bonds of gp41 are reduced by P4HB/PDI, following binding to CD4 receptor.

Its subcellular location is the virion membrane. The protein localises to the host cell membrane. It is found in the host endosome membrane. Its function is as follows. Oligomerizes in the host endoplasmic reticulum into predominantly trimers. In a second time, gp160 transits in the host Golgi, where glycosylation is completed. The precursor is then proteolytically cleaved in the trans-Golgi and thereby activated by cellular furin or furin-like proteases to produce gp120 and gp41. Functionally, attaches the virus to the host lymphoid cell by binding to the primary receptor CD4. This interaction induces a structural rearrangement creating a high affinity binding site for a chemokine coreceptor like CXCR4 and/or CCR5. Acts as a ligand for CD209/DC-SIGN and CLEC4M/DC-SIGNR, which are respectively found on dendritic cells (DCs), and on endothelial cells of liver sinusoids and lymph node sinuses. These interactions allow capture of viral particles at mucosal surfaces by these cells and subsequent transmission to permissive cells. HIV subverts the migration properties of dendritic cells to gain access to CD4+ T-cells in lymph nodes. Virus transmission to permissive T-cells occurs either in trans (without DCs infection, through viral capture and transmission), or in cis (following DCs productive infection, through the usual CD4-gp120 interaction), thereby inducing a robust infection. In trans infection, bound virions remain infectious over days and it is proposed that they are not degraded, but protected in non-lysosomal acidic organelles within the DCs close to the cell membrane thus contributing to the viral infectious potential during DCs' migration from the periphery to the lymphoid tissues. On arrival at lymphoid tissues, intact virions recycle back to DCs' cell surface allowing virus transmission to CD4+ T-cells. In terms of biological role, acts as a class I viral fusion protein. Under the current model, the protein has at least 3 conformational states: pre-fusion native state, pre-hairpin intermediate state, and post-fusion hairpin state. During fusion of viral and target intracellular membranes, the coiled coil regions (heptad repeats) assume a trimer-of-hairpins structure, positioning the fusion peptide in close proximity to the C-terminal region of the ectodomain. The formation of this structure appears to drive apposition and subsequent fusion of viral and target cell membranes. Complete fusion occurs in host cell endosomes and is dynamin-dependent, however some lipid transfer might occur at the plasma membrane. The virus undergoes clathrin-dependent internalization long before endosomal fusion, thus minimizing the surface exposure of conserved viral epitopes during fusion and reducing the efficacy of inhibitors targeting these epitopes. Membranes fusion leads to delivery of the nucleocapsid into the cytoplasm. This chain is Envelope glycoprotein gp160, found in Human immunodeficiency virus type 1 group O (isolate ANT70) (HIV-1).